A 450-amino-acid chain; its full sequence is UDP-N-acetylmuramoylalanine--D-glutamate ligase (450 aa).

Glycine 111–threonine 117 contacts ATP.

Belongs to the MurCDEF family.

The protein localises to the cytoplasm. The enzyme catalyses UDP-N-acetyl-alpha-D-muramoyl-L-alanine + D-glutamate + ATP = UDP-N-acetyl-alpha-D-muramoyl-L-alanyl-D-glutamate + ADP + phosphate + H(+). It functions in the pathway cell wall biogenesis; peptidoglycan biosynthesis. Its function is as follows. Cell wall formation. Catalyzes the addition of glutamate to the nucleotide precursor UDP-N-acetylmuramoyl-L-alanine (UMA). The protein is UDP-N-acetylmuramoylalanine--D-glutamate ligase of Rickettsia bellii (strain RML369-C).